A 189-amino-acid polypeptide reads, in one-letter code: Probable nicotinate-nucleotide adenylyltransferase (189 aa).

Belongs to the NadD family.

It catalyses the reaction nicotinate beta-D-ribonucleotide + ATP + H(+) = deamido-NAD(+) + diphosphate. The protein operates within cofactor biosynthesis; NAD(+) biosynthesis; deamido-NAD(+) from nicotinate D-ribonucleotide: step 1/1. Catalyzes the reversible adenylation of nicotinate mononucleotide (NaMN) to nicotinic acid adenine dinucleotide (NaAD). The protein is Probable nicotinate-nucleotide adenylyltransferase of Ruegeria sp. (strain TM1040) (Silicibacter sp.).